A 461-amino-acid polypeptide reads, in one-letter code: GTPase Der (461 aa).

2 EngA-type G domains span residues 9–171 (KTIA…DLNQ) and 200–371 (IQVG…ECFS). Residues 15–22 (GQPNVGKS), 62–66 (DTGGM), 123–126 (NKID), 206–213 (GRVNVGKS), 253–257 (DTAGI), and 317–320 (NKWD) contribute to the GTP site. A KH-like domain is found at 372-456 (KRIPTSLLNS…PLILNAKDKK (85 aa)).

The protein belongs to the TRAFAC class TrmE-Era-EngA-EngB-Septin-like GTPase superfamily. EngA (Der) GTPase family. Associates with the 50S ribosomal subunit.

Functionally, GTPase that plays an essential role in the late steps of ribosome biogenesis. The protein is GTPase Der of Helicobacter pylori (strain Shi470).